The chain runs to 351 residues: MTSPCSPPLKPPISPPKTPVPQASSIPSPPLPPSPLDFSALPSPPWSQQTPVPPPLPLPPPPAATGPAPRHVFGLEKSQLLKEAFDKAGPVPKGREDVKRLLKLHKDRFRGDLRWILFCADLPSLIQEGPQCGLVALWMAGTLLSPPSGVPLERLIRVATERGYTAQGEMFSVADMGRLAQEVLGCQAKLLSGGLGGPNRDLVLQHLVTGHPLLIPYDEDFNHEPCQRKGHKAHWAVSAGVLLGVRAVPSLGYTEDPELPGLFHPVLGTPCQPPSLPEEGSPGAVYLLSKQGKSWHYQLWDYDQVRESNLQLTDFSPSRATDGRVYVVPVGGVRAGLCGQALLLTPQDCSH.

Residues 1-19 (MTSPCSPPLKPPISPPKTP) show a composition bias toward pro residues. The interval 1-70 (MTSPCSPPLK…PPAATGPAPR (70 aa)) is disordered. The span at 36-50 (LDFSALPSPPWSQQT) shows a compositional bias: low complexity. The segment covering 51-64 (PVPPPLPLPPPPAA) has biased composition (pro residues). Residues 124–244 (SLIQEGPQCG…WAVSAGVLLG (121 aa)) are peptidase C39-like. The active site involves Cys-132. A Phosphoserine modification is found at Ser-316.

This sequence belongs to the ACTMAP family. Interacts (via N-terminus) with PFN2 isoforms IIa and IIb; the interactions may facilitate efficient cleavage of the acetylated N-terminus of immature actin. Interacts with PFN1.

The protein localises to the cytoplasm. It catalyses the reaction N-terminal N(alpha)-acetyl-L-methionyl-L-aspartyl-[protein] + H2O = N-terminal L-aspartyl-[protein] + N-acetyl-L-methionine. It carries out the reaction N-terminal N(alpha)-acetyl-L-methionyl-L-glutamyl-[protein] + H2O = N-terminal L-glutamyl-[protein] + N-acetyl-L-methionine. The catalysed reaction is N-terminal N(alpha)-acetyl-L-cysteinyl-L-aspartyl-[protein] + H2O = N-terminal L-aspartyl-[protein] + N-acetyl-L-cysteine. The enzyme catalyses N-terminal N(alpha)-acetyl-L-cysteinyl-L-glutamyl-[protein] + H2O = N-terminal L-glutamyl-[protein] + N-acetyl-L-cysteine. Its function is as follows. Actin maturation protease that specifically mediates the cleavage of immature acetylated N-terminal actin, thereby contributing to actin maturation. Cleaves N-terminal acetylated methionine of immature cytoplasmic beta- and gamma-actins ACTB and ACTG1 after translation. Cleaves N-terminal acetylated cysteine of muscle alpha-actins ACTA1, ACTC1 and ACTA2 after canonical removal of N-terminal methionine. The protein is Actin maturation protease of Homo sapiens (Human).